Reading from the N-terminus, the 380-residue chain is Cytochrome b (380 aa).

4 consecutive transmembrane segments (helical) span residues 34–54 (FGSL…LLAM), 78–99 (WLIR…FLHI), 114–134 (WNTG…GYVL), and 179–199 (FFAL…VHLT). Residues histidine 84 and histidine 98 each coordinate heme b. Residues histidine 183 and histidine 197 each contribute to the heme b site. Residue histidine 202 coordinates a ubiquinone. The next 4 membrane-spanning stretches (helical) occupy residues 227–247 (LKDI…ALFS), 289–309 (LGGV…PFLH), 321–341 (LSQT…WIGS), and 348–368 (FMII…ILFP).

Belongs to the cytochrome b family. The cytochrome bc1 complex contains 11 subunits: 3 respiratory subunits (MT-CYB, CYC1 and UQCRFS1), 2 core proteins (UQCRC1 and UQCRC2) and 6 low-molecular weight proteins (UQCRH/QCR6, UQCRB/QCR7, UQCRQ/QCR8, UQCR10/QCR9, UQCR11/QCR10 and a cleavage product of UQCRFS1). This cytochrome bc1 complex then forms a dimer. It depends on heme b as a cofactor.

It is found in the mitochondrion inner membrane. Its function is as follows. Component of the ubiquinol-cytochrome c reductase complex (complex III or cytochrome b-c1 complex) that is part of the mitochondrial respiratory chain. The b-c1 complex mediates electron transfer from ubiquinol to cytochrome c. Contributes to the generation of a proton gradient across the mitochondrial membrane that is then used for ATP synthesis. This chain is Cytochrome b (MT-CYB), found in Gallus lafayettii (Sri Lanka junglefowl).